Consider the following 302-residue polypeptide: NAD kinase (302 aa).

D79 acts as the Proton acceptor in catalysis. Residues 79–80, 153–154, R181, D183, 194–199, A218, and Q252 contribute to the NAD(+) site; these read DG, ND, and TAYALS.

This sequence belongs to the NAD kinase family. A divalent metal cation serves as cofactor.

It is found in the cytoplasm. The enzyme catalyses NAD(+) + ATP = ADP + NADP(+) + H(+). Its function is as follows. Involved in the regulation of the intracellular balance of NAD and NADP, and is a key enzyme in the biosynthesis of NADP. Catalyzes specifically the phosphorylation on 2'-hydroxyl of the adenosine moiety of NAD to yield NADP. The chain is NAD kinase from Ralstonia nicotianae (strain ATCC BAA-1114 / GMI1000) (Ralstonia solanacearum).